The chain runs to 372 residues: Spermidine/putrescine import ATP-binding protein PotA (372 aa).

Residues 12–250 (VSIRSVRKVY…PRNRFVADFI (239 aa)) enclose the ABC transporter domain. 48–55 (GPSGCGKT) lines the ATP pocket.

Belongs to the ABC transporter superfamily. Spermidine/putrescine importer (TC 3.A.1.11.1) family. As to quaternary structure, the complex is composed of two ATP-binding proteins (PotA), two transmembrane proteins (PotB and PotC) and a solute-binding protein (PotD).

The protein localises to the cell inner membrane. It carries out the reaction ATP + H2O + polyamine-[polyamine-binding protein]Side 1 = ADP + phosphate + polyamineSide 2 + [polyamine-binding protein]Side 1.. Part of the ABC transporter complex PotABCD involved in spermidine/putrescine import. Responsible for energy coupling to the transport system. This chain is Spermidine/putrescine import ATP-binding protein PotA, found in Pseudomonas fluorescens (strain ATCC BAA-477 / NRRL B-23932 / Pf-5).